The primary structure comprises 462 residues: ATP synthase subunit beta (462 aa).

151–158 (GGAGVGKT) provides a ligand contact to ATP.

This sequence belongs to the ATPase alpha/beta chains family. As to quaternary structure, F-type ATPases have 2 components, CF(1) - the catalytic core - and CF(0) - the membrane proton channel. CF(1) has five subunits: alpha(3), beta(3), gamma(1), delta(1), epsilon(1). CF(0) has three main subunits: a(1), b(2) and c(9-12). The alpha and beta chains form an alternating ring which encloses part of the gamma chain. CF(1) is attached to CF(0) by a central stalk formed by the gamma and epsilon chains, while a peripheral stalk is formed by the delta and b chains.

It is found in the cell inner membrane. It catalyses the reaction ATP + H2O + 4 H(+)(in) = ADP + phosphate + 5 H(+)(out). Its function is as follows. Produces ATP from ADP in the presence of a proton gradient across the membrane. The catalytic sites are hosted primarily by the beta subunits. The sequence is that of ATP synthase subunit beta from Chlorobaculum parvum (strain DSM 263 / NCIMB 8327) (Chlorobium vibrioforme subsp. thiosulfatophilum).